Reading from the N-terminus, the 1325-residue chain is Nonribosomal peptide synthetase (1325 aa).

Residues 248–644 (YQQLDRLSTR…LGEIEYQIQQ (397 aa)) are adenylation. The Carrier domain occupies 779–856 (EIVNPGEITL…DQARLLRPLS (78 aa)). An O-(pantetheine 4'-phosphoryl)serine modification is found at Ser-816. The segment at 893–1310 (EDVYPCTPLQ…DDYSTTLHTL (418 aa)) is condensation.

It belongs to the NRP synthetase family. It depends on pantetheine 4'-phosphate as a cofactor.

It participates in antifungal biosynthesis. Functionally, nonribosomal peptide synthetase; part of the gene cluster that mediates the biosynthesis of the tetrahydropyranyl antifungal agent lanomycin that acts as an inhibitor of CYP51 and blocks the ergosterol biosynthesis. The biosynthesis probably begins with the formation of an hexaketide, followed by methionine mediated alkylation of C-2 and C-6, and methylation of the reduced C-3 oxygen, pyran forming reductive ring closure, oxygenation of C-4, beta-keto reduction, enoyl reduction and dehydration of the remaining oxygens, and finally, acylation with glycine to complete the biosynthesis. This is Nonribosomal peptide synthetase from Pyrenophora dematioidea (Helminthosporium dematioideum).